The primary structure comprises 25 residues: Non-specific lipid-transfer protein 3 (25 aa).

As to expression, seeds (at protein level).

Functionally, plant non-specific lipid-transfer proteins transfer phospholipids as well as galactolipids across membranes. May play a role in wax or cutin deposition in the cell walls of expanding epidermal cells and certain secretory tissues. Has antibacterial and antifungal activity. Displays antibacterial activity towards both Gram-negative bacteria, P.carotovorum (IC(50)=11.5 uM) and P.syringae (IC(50)=12.0 uM), and Gram-positive bacterium C.michiganensis subsp michiganense (IC(50)=11.2 uM). Also displays antifungal activity towards A.niger VKM F-33 (IC(50)=1.05 uM) and B.cinerea TSKHA (IC(50)=1.88 uM) and relatively moderate activity towards B.sorokiniana VKM F-1448 (IC(50)=1.55 uM). Displays some inhibitory activity towards P.infestans OSV12. This chain is Non-specific lipid-transfer protein 3, found in Nigella sativa (Black cumin).